The chain runs to 204 residues: Partner of Y14 and mago (204 aa).

Disordered stretches follow at residues 1 to 121 (MGSR…QSVN) and 133 to 153 (SSNN…EDVE). The span at 7-36 (EQGKRMAELSKNLKEGERILEPTRRPDGTL) shows a compositional bias: basic and acidic residues. The segment covering 104-121 (KANSSEDGSASNGSQSVN) has biased composition (polar residues). The Nuclear export signal motif lies at 195-200 (ELKALE).

Belongs to the pym family. Interacts with MAGO and Y14. Expressed in root and shoot meristems, cotyledons, vascular tissues of leaves, receptacle of flowers and siliques, and pollen grains.

The protein resides in the cytoplasm. Its subcellular location is the nucleus. It localises to the nucleolus. The protein localises to the nucleoplasm. In terms of biological role, key regulator of the exon junction complex (EJC), a multiprotein complex that associates immediately upstream of the exon-exon junction on mRNAs and serves as a positional landmark for the intron exon structure of genes and directs post-transcriptional processes in the cytoplasm such as mRNA export, nonsense-mediated mRNA decay (NMD) or translation. Acts as an EJC disassembly factor, allowing translation-dependent EJC removal and recycling by disrupting mature EJC from spliced mRNAs. Can increase in vitro the expression from reporter constructs that contain leader introns required for the expression of different genes. In association with MAGO and PYM, participates in intron-mediated enhancement of gene expression. The sequence is that of Partner of Y14 and mago from Arabidopsis thaliana (Mouse-ear cress).